Consider the following 340-residue polypeptide: tRNA-specific 2-thiouridylase MnmA (340 aa).

Residues 6–13 (AMSGGVDS) and M32 each bind ATP. C92 serves as the catalytic Nucleophile. A disulfide bridge links C92 with C186. G116 lines the ATP pocket. Positions 134–136 (KDQ) are interaction with tRNA. C186 acts as the Cysteine persulfide intermediate in catalysis. The segment at 288–289 (RY) is interaction with tRNA.

This sequence belongs to the MnmA/TRMU family.

Its subcellular location is the cytoplasm. It catalyses the reaction S-sulfanyl-L-cysteinyl-[protein] + uridine(34) in tRNA + AH2 + ATP = 2-thiouridine(34) in tRNA + L-cysteinyl-[protein] + A + AMP + diphosphate + H(+). Functionally, catalyzes the 2-thiolation of uridine at the wobble position (U34) of tRNA, leading to the formation of s(2)U34. The sequence is that of tRNA-specific 2-thiouridylase MnmA from Campylobacter concisus (strain 13826).